A 387-amino-acid polypeptide reads, in one-letter code: Patatin-01 (387 aa).

The signal sequence occupies residues 1 to 23 (MATTKSFLILSVMILATTSSTFA). Residues 32–230 (LSIDGGGIKG…TVADPALLSV (199 aa)) enclose the PNPLA domain. Positions 36 to 41 (GGGIKG) match the GXGXXG motif. A GXSXG motif is present at residues 75–79 (GTSTG). Ser77 acts as the Nucleophile in catalysis. Residue Asn115 is glycosylated (N-linked (GlcNAc...) asparagine). Asp216 (proton acceptor) is an active-site residue. The DGA/G signature appears at 216-218 (DGA). Residues 361–385 (ETYEEALKRFAKLLSDRKKLRANKA) adopt a coiled-coil conformation.

The protein belongs to the patatin family. Tuber.

It is found in the vacuole. In terms of biological role, probable lipolytic acyl hydrolase (LAH), an activity which is thought to be involved in the response of tubers to pathogens. The protein is Patatin-01 of Solanum tuberosum (Potato).